The primary structure comprises 375 residues: Chaperone protein DnaJ (375 aa).

The region spanning 5-69 is the J domain; the sequence is DYYEILGIDK…QKRAQYDQFG (65 aa). The CR-type zinc-finger motif lies at 131–213; sequence GKETDIEIPK…CGGSGTVQKN (83 aa). Zn(2+) is bound by residues cysteine 144, cysteine 147, cysteine 161, cysteine 164, cysteine 187, cysteine 190, cysteine 201, and cysteine 204. CXXCXGXG motif repeat units follow at residues 144–151, 161–168, 187–194, and 201–208; these read CDTCNGSG, CSHCHGSG, CNYCQGTG, and CNTCGGSG.

This sequence belongs to the DnaJ family. As to quaternary structure, homodimer. Zn(2+) serves as cofactor.

It localises to the cytoplasm. Its function is as follows. Participates actively in the response to hyperosmotic and heat shock by preventing the aggregation of stress-denatured proteins and by disaggregating proteins, also in an autonomous, DnaK-independent fashion. Unfolded proteins bind initially to DnaJ; upon interaction with the DnaJ-bound protein, DnaK hydrolyzes its bound ATP, resulting in the formation of a stable complex. GrpE releases ADP from DnaK; ATP binding to DnaK triggers the release of the substrate protein, thus completing the reaction cycle. Several rounds of ATP-dependent interactions between DnaJ, DnaK and GrpE are required for fully efficient folding. Also involved, together with DnaK and GrpE, in the DNA replication of plasmids through activation of initiation proteins. The sequence is that of Chaperone protein DnaJ from Oceanobacillus iheyensis (strain DSM 14371 / CIP 107618 / JCM 11309 / KCTC 3954 / HTE831).